Consider the following 115-residue polypeptide: Large ribosomal subunit protein bL20 (115 aa).

This sequence belongs to the bacterial ribosomal protein bL20 family.

Functionally, binds directly to 23S ribosomal RNA and is necessary for the in vitro assembly process of the 50S ribosomal subunit. It is not involved in the protein synthesizing functions of that subunit. This is Large ribosomal subunit protein bL20 from Microcystis aeruginosa (strain NIES-843 / IAM M-2473).